The following is an 849-amino-acid chain: Aminopeptidase N (849 aa).

Substrate contacts are provided by residues Glu122 and 259 to 263 (GAMEN). His294 is a binding site for Zn(2+). Glu295 functions as the Proton acceptor in the catalytic mechanism. Zn(2+) is bound by residues His298 and Glu317.

The protein belongs to the peptidase M1 family. Monomer. The cofactor is Zn(2+).

The protein localises to the cytoplasm. It carries out the reaction Release of an N-terminal amino acid, Xaa-|-Yaa- from a peptide, amide or arylamide. Xaa is preferably Ala, but may be most amino acids including Pro (slow action). When a terminal hydrophobic residue is followed by a prolyl residue, the two may be released as an intact Xaa-Pro dipeptide.. Its function is as follows. Aminopeptidase with broad substrate specificity to several peptides. It has more affinity for oligopeptides than for dipeptides. It plays an essential role in the metabolism, it may be involved in nitrogen supply or protein turnover. This is Aminopeptidase N (pepN) from Lactococcus lactis subsp. lactis (Streptococcus lactis).